The primary structure comprises 121 residues: Prefoldin subunit beta (121 aa).

The protein belongs to the prefoldin subunit beta family. In terms of assembly, heterohexamer of two alpha and four beta subunits.

Its subcellular location is the cytoplasm. Molecular chaperone capable of stabilizing a range of proteins. Seems to fulfill an ATP-independent, HSP70-like function in archaeal de novo protein folding. This Methanothermobacter thermautotrophicus (strain ATCC 29096 / DSM 1053 / JCM 10044 / NBRC 100330 / Delta H) (Methanobacterium thermoautotrophicum) protein is Prefoldin subunit beta (pfdB).